Here is a 300-residue protein sequence, read N- to C-terminus: N-acetylmuramic acid 6-phosphate etherase 2 (300 aa).

The SIS domain maps to 57 to 220; that stretch reads ITAAFANGGR…TTGAMIRSGK (164 aa). Residue Glu-85 is the Proton donor of the active site. The active site involves Glu-116.

Belongs to the GCKR-like family. MurNAc-6-P etherase subfamily. In terms of assembly, homodimer.

It catalyses the reaction N-acetyl-D-muramate 6-phosphate + H2O = N-acetyl-D-glucosamine 6-phosphate + (R)-lactate. Its pathway is amino-sugar metabolism; 1,6-anhydro-N-acetylmuramate degradation. It participates in amino-sugar metabolism; N-acetylmuramate degradation. The protein operates within cell wall biogenesis; peptidoglycan recycling. In terms of biological role, specifically catalyzes the cleavage of the D-lactyl ether substituent of MurNAc 6-phosphate, producing GlcNAc 6-phosphate and D-lactate. Together with AnmK, is also required for the utilization of anhydro-N-acetylmuramic acid (anhMurNAc) either imported from the medium or derived from its own cell wall murein, and thus plays a role in cell wall recycling. The sequence is that of N-acetylmuramic acid 6-phosphate etherase 2 from Vibrio parahaemolyticus serotype O3:K6 (strain RIMD 2210633).